A 177-amino-acid polypeptide reads, in one-letter code: Large ribosomal subunit protein uL6 (177 aa).

It belongs to the universal ribosomal protein uL6 family. In terms of assembly, part of the 50S ribosomal subunit.

This protein binds to the 23S rRNA, and is important in its secondary structure. It is located near the subunit interface in the base of the L7/L12 stalk, and near the tRNA binding site of the peptidyltransferase center. In Rickettsia massiliae (strain Mtu5), this protein is Large ribosomal subunit protein uL6.